A 281-amino-acid polypeptide reads, in one-letter code: Elongation factor Ts (281 aa).

An involved in Mg(2+) ion dislocation from EF-Tu region spans residues 80 to 83; that stretch reads TDFV.

It belongs to the EF-Ts family.

It localises to the cytoplasm. In terms of biological role, associates with the EF-Tu.GDP complex and induces the exchange of GDP to GTP. It remains bound to the aminoacyl-tRNA.EF-Tu.GTP complex up to the GTP hydrolysis stage on the ribosome. In Aliivibrio fischeri (strain MJ11) (Vibrio fischeri), this protein is Elongation factor Ts.